Here is a 1076-residue protein sequence, read N- to C-terminus: Regulator of G-protein signaling protein-like (1076 aa).

In terms of domain architecture, RGS spans 645–764 (NLTEVLLNTQ…LFPPHHQEVE (120 aa)). Polar residues predominate over residues 834-852 (TTAHNTSGRSAPPSTNVRS). Residues 834–854 (TTAHNTSGRSAPPSTNVRSAD) form a disordered region. The chain crosses the membrane as a helical span at residues 960–982 (VFHGAIMSVFPVVMYFWKRFCFW).

Its subcellular location is the membrane. The sequence is that of Regulator of G-protein signaling protein-like (RGSL1) from Homo sapiens (Human).